The sequence spans 103 residues: Large ribosomal subunit protein uL24 (103 aa).

This sequence belongs to the universal ribosomal protein uL24 family. Part of the 50S ribosomal subunit.

Its function is as follows. One of two assembly initiator proteins, it binds directly to the 5'-end of the 23S rRNA, where it nucleates assembly of the 50S subunit. In terms of biological role, one of the proteins that surrounds the polypeptide exit tunnel on the outside of the subunit. The chain is Large ribosomal subunit protein uL24 from Listeria monocytogenes serotype 4a (strain HCC23).